A 213-amino-acid polypeptide reads, in one-letter code: Motile sperm domain-containing protein 1 (213 aa).

Positions 16 to 143 (PVFVFPTELI…KEHLTESVFF (128 aa)) constitute an MSP domain. Helical transmembrane passes span 159–179 (SLLTVFLGVVCIAALMLPTLG) and 191–211 (LSVNQKLVAAYILGLITMAIL). Residues 205–208 (LITM) carry the Nuclear export signal motif.

Its subcellular location is the endoplasmic reticulum membrane. It is found in the golgi apparatus membrane. Functionally, plays a role in differentiation and/or proliferation of mesenchymal stem cells. Proposed to be involved in epithelial-to-mesenchymal transition (EMT). However, another study suggests that it is not required for EMT or stem cell self-renewal and acts during later stages of differentiation. The polypeptide is Motile sperm domain-containing protein 1 (Mospd1) (Rattus norvegicus (Rat)).